We begin with the raw amino-acid sequence, 476 residues long: Adenosylhomocysteinase (476 aa).

Residues T61, D140, and E200 each contribute to the substrate site. Residue 201 to 203 (TTT) participates in NAD(+) binding. Residues K230 and D234 each coordinate substrate. Residues N235, 264–269 (GYGDVG), E287, N322, 343–345 (IGH), and N389 contribute to the NAD(+) site.

This sequence belongs to the adenosylhomocysteinase family. NAD(+) is required as a cofactor.

The protein resides in the cytoplasm. It carries out the reaction S-adenosyl-L-homocysteine + H2O = L-homocysteine + adenosine. The protein operates within amino-acid biosynthesis; L-homocysteine biosynthesis; L-homocysteine from S-adenosyl-L-homocysteine: step 1/1. May play a key role in the regulation of the intracellular concentration of adenosylhomocysteine. This chain is Adenosylhomocysteinase, found in Acidovorax ebreus (strain TPSY) (Diaphorobacter sp. (strain TPSY)).